Here is a 1202-residue protein sequence, read N- to C-terminus: Nucleolar protein 6 (1202 aa).

The segment at 1–64 (MNKTKRKQQS…KKYKDNETNK (64 aa)) is disordered.

Belongs to the NRAP family. As to quaternary structure, part of the small subunit (SSU) processome, composed of more than 70 proteins and the RNA chaperone small nucleolar RNA (snoRNA) U3.

Its subcellular location is the nucleus. It localises to the nucleolus. It is found in the chromosome. Part of the small subunit (SSU) processome, first precursor of the small eukaryotic ribosomal subunit. During the assembly of the SSU processome in the nucleolus, many ribosome biogenesis factors, an RNA chaperone and ribosomal proteins associate with the nascent pre-rRNA and work in concert to generate RNA folding, modifications, rearrangements and cleavage as well as targeted degradation of pre-ribosomal RNA by the RNA exosome. The polypeptide is Nucleolar protein 6 (Drosophila willistoni (Fruit fly)).